The primary structure comprises 671 residues: Tail sheath protein (671 aa).

The protein belongs to the myoviridae tail sheath protein family. As to quaternary structure, homomultimer.

It localises to the virion. The protein resides in the host cytoplasm. Its function is as follows. Polymerizes as an extended structure around the baseplate-tail tube complex. During ejection, the sheath shifts to a contracted form, thereby making the inner tail tube protrude through the host cell envelope. In Vibrio phage KVP40 (isolate Vibrio parahaemolyticus/Japan/Matsuzaki/1991) (KVP40), this protein is Tail sheath protein.